Consider the following 267-residue polypeptide: MFPQDTLTIGGKVFTSRLMLGTGKFTDFHVMRDALEASGTQIVTVAIRRVELKAPGHVGLLDALDLSRYQLLPNTAGCRTAEEAVRVARLARAATGVNWVKLEVIPDPRWLLPDPIGTLKAAEILVGEGFTVLPYVQPDAVLARALERVGCATVMPLASPIGSGRGLRTGELLRTVLDGAGVPIVVDAGLGVPSDAAQALEAGADAVLVNTAVAEARDPVGMAQAFALGVQAGRAAFLAGRMAERTHASPSSPAAGVPCLPDPEVPV.

Catalysis depends on Lys101, which acts as the Schiff-base intermediate with DXP. 1-deoxy-D-xylulose 5-phosphate contacts are provided by residues Gly162, 188 to 189 (AG), and 210 to 211 (NT). Residues 247–267 (HASPSSPAAGVPCLPDPEVPV) are disordered.

Belongs to the ThiG family. Homotetramer. Forms heterodimers with either ThiH or ThiS.

Its subcellular location is the cytoplasm. The enzyme catalyses [ThiS sulfur-carrier protein]-C-terminal-Gly-aminoethanethioate + 2-iminoacetate + 1-deoxy-D-xylulose 5-phosphate = [ThiS sulfur-carrier protein]-C-terminal Gly-Gly + 2-[(2R,5Z)-2-carboxy-4-methylthiazol-5(2H)-ylidene]ethyl phosphate + 2 H2O + H(+). It functions in the pathway cofactor biosynthesis; thiamine diphosphate biosynthesis. Functionally, catalyzes the rearrangement of 1-deoxy-D-xylulose 5-phosphate (DXP) to produce the thiazole phosphate moiety of thiamine. Sulfur is provided by the thiocarboxylate moiety of the carrier protein ThiS. In vitro, sulfur can be provided by H(2)S. In Deinococcus geothermalis (strain DSM 11300 / CIP 105573 / AG-3a), this protein is Thiazole synthase.